The chain runs to 433 residues: Ligand-dependent corepressor (433 aa).

The interval 1-51 is disordered; sequence MQRMIQQFAAEYTSKNSSTQDPSQPNSTKNQSLPKASPVTTSPTAATTQNP. Positions 13 to 34 are enriched in polar residues; the sequence is TSKNSSTQDPSQPNSTKNQSLP. Over residues 36-48 the composition is skewed to low complexity; it reads ASPVTTSPTAATT. A Phosphoserine modification is found at S42. Residues 53 to 57 carry the Interaction with nuclear receptors motif; the sequence is LSKLL. S63 carries the phosphoserine modification. The tract at residues 64-147 is disordered; the sequence is PLDLTVRKSQ…GTREGFGHST (84 aa). Residues 93-110 show a composition bias toward polar residues; the sequence is AGSTSLSHSPGCSSTQGN. S249 carries the phosphoserine modification. K254 is covalently cross-linked (Glycyl lysine isopeptide (Lys-Gly) (interchain with G-Cter in SUMO2)). The disordered stretch occupies residues 299 to 348; the sequence is QSRKSMLDAGPDSWGSDAEQSTSGQPYPTSDQEGDPGSKQPRKKRGRYRQ. Polar residues predominate over residues 316–329; sequence AEQSTSGQPYPTSD. A Nuclear localization signal motif is present at residues 339-345; that stretch reads PRKKRGR. Residues 340–392 enclose the HTH psq-type domain; it reads RKKRGRYRQYNSEILEEAISVVMSGKMSVSKAQSIYGIPHSTLEYKVKERLGT. Residue R345 forms a Glycyl lysine isopeptide (Lys-Gly) (interchain with G-Cter in SUMO2) linkage. Residues 368–388 constitute a DNA-binding region (H-T-H motif); that stretch reads VSKAQSIYGIPHSTLEYKVKE. G391 is covalently cross-linked (Glycyl lysine isopeptide (Lys-Gly) (interchain with G-Cter in SUMO2)). The disordered stretch occupies residues 393 to 412; it reads LKNPPKKKMKLMRSEGPDVS. K414 participates in a covalent cross-link: Glycyl lysine isopeptide (Lys-Gly) (interchain with G-Cter in SUMO2).

Interacts with ESR1 and ESR2 in the presence of estradiol. Interacts with CTBP1, HDAC3 and HDAC6. Component of a large corepressor complex that contains about 20 proteins, including CTBP1, CTBP2, HDAC1 and HDAC2. As to expression, ubiquitous.

It localises to the nucleus. May act as transcription activator that binds DNA elements with the sequence 5'-CCCTATCGATCGATCTCTACCT-3'. Repressor of ligand-dependent transcription activation by target nuclear receptors. Repressor of ligand-dependent transcription activation by ESR1, ESR2, NR3C1, PGR, RARA, RARB, RARG, RXRA and VDR. The protein is Ligand-dependent corepressor of Homo sapiens (Human).